The following is a 164-amino-acid chain: Photosystem II extrinsic protein V (164 aa).

The N-terminal stretch at 1–27 (MNRISIYRIKVLAFLFAVSTYVYPASS) is a signal peptide. Cys-64, Cys-67, His-68, and His-119 together coordinate heme c.

This sequence belongs to the cytochrome c family. PsbV subfamily. In terms of assembly, PSII is composed of 1 copy each of membrane proteins PsbA, PsbB, PsbC, PsbD, PsbE, PsbF, PsbH, PsbI, PsbJ, PsbK, PsbL, PsbM, PsbT, PsbY, PsbZ, Psb30/Ycf12, at least 3 peripheral proteins of the oxygen-evolving complex and a large number of cofactors. It forms dimeric complexes. The extrinsic subunits in red algae are PsbO (OEC33), PsbQ', cytochrome c-550 and PsbU. Heme c serves as cofactor.

It localises to the plastid. The protein localises to the chloroplast thylakoid membrane. Functionally, one of the extrinsic, lumenal subunits of photosystem II (PSII). PSII is a light-driven water plastoquinone oxidoreductase, using light energy to abstract electrons from H(2)O, generating a proton gradient subsequently used for ATP formation. The extrinsic proteins stabilize the structure of photosystem II oxygen-evolving complex (OEC), the ion environment of oxygen evolution and protect the OEC against heat-induced inactivation. The chain is Photosystem II extrinsic protein V from Cyanidium caldarium (Red alga).